Consider the following 120-residue polypeptide: Protein p14.5 (120 aa).

Disordered regions lie at residues M1–D27 and R80–K120. The residue at position 2 (A2) is an N-acetylalanine; by host. Positions K103–K120 are enriched in basic residues.

It belongs to the asfivirus structural protein p14.5 family. In terms of assembly, interacts with the major capsid protein. Interacts with host IRF3; this interaction interferes with the recruitment of IRF3 to TBK1. Post-translationally, acetylated.

It is found in the virion. Structural protein required for transport of intracellular particles from the assembly sites to the plasma membrane. Binds to both ssDNA and dsDNA. Suppressed the activation of the cGAS/STING pathway by interfering with the recruitment of IRF3 to TBK1, which in turn suppresses IRF3 phosphorylation, decreasing interferon production. The chain is Protein p14.5 from Ornithodoros (relapsing fever ticks).